Reading from the N-terminus, the 733-residue chain is Catalase-peroxidase 2 (733 aa).

The disordered stretch occupies residues 1-35; it reads MAEAETHPPIGESQTEPAESGCPMRIKPPVEGGSN. A cross-link (tryptophyl-tyrosyl-methioninium (Trp-Tyr) (with M-260)) is located at residues 106–234; sequence WHAAGTYRVE…PXXPHMGLIY (129 aa). H107 (proton acceptor) is an active-site residue. The tryptophyl-tyrosyl-methioninium (Tyr-Met) (with W-106) cross-link spans 234 to 260; it reads YVNPEGPEGNPDYLAAAIDIRETFGRM. H275 serves as a coordination point for heme.

This sequence belongs to the peroxidase family. Peroxidase/catalase subfamily. In terms of assembly, homodimer or homotetramer. The cofactor is heme b. In terms of processing, formation of the three residue Trp-Tyr-Met cross-link is important for the catalase, but not the peroxidase activity of the enzyme.

It carries out the reaction H2O2 + AH2 = A + 2 H2O. The catalysed reaction is 2 H2O2 = O2 + 2 H2O. Bifunctional enzyme with both catalase and broad-spectrum peroxidase activity. May play a role in the intracellular survival of mycobacteria. The sequence is that of Catalase-peroxidase 2 from Mycolicibacterium fortuitum (Mycobacterium fortuitum).